The sequence spans 895 residues: AP-1 complex subunit gamma (895 aa).

HEAT repeat units follow at residues 130-166 (TAMA…LRKV), 167-205 (PDLT…MDST), 211-256 (KKMV…ILGQ), 301-339 (NGLK…TDIQ), and 341-376 (VQRH…ESNI). Disordered stretches follow at residues 591–687 (KQEE…MNNM), 706–733 (NNNS…NNKS), and 746–770 (QLTP…QTSV). Low complexity-rich tracts occupy residues 604–626 (PTQT…QSSQ), 639–658 (QSSA…GGNA), 675–687 (NGNM…MNNM), 706–731 (NNNS…NNNN), and 746–765 (QLTP…LSPT). In terms of domain architecture, GAE spans 775-893 (PQPLTFLVYQ…SDVPDTPLPS (119 aa)).

This sequence belongs to the adaptor complexes large subunit family. In terms of assembly, adaptor protein complex 1 (AP-1) is a heterotetramer composed of two large adaptins (gamma-type subunit and beta-type subunit), a medium adaptin (mu-type subunit) and a small adaptin (sigma-type subunit). Interacts with rhgA.

The protein resides in the golgi apparatus. It is found in the trans-Golgi network. Its subcellular location is the cytoplasmic vesicle. The protein localises to the clathrin-coated vesicle membrane. In terms of biological role, subunit of clathrin-associated adaptor protein complex 1 that plays a role in protein sorting in the trans-Golgi network (TGN) and endosomes. The AP complexes mediate the recruitment of clathrin to membranes and the recognition of sorting signals within the cytosolic tails of transmembrane cargo molecules. Also involved in early steps of phagocytosis and macropinocytosis. In Dictyostelium discoideum (Social amoeba), this protein is AP-1 complex subunit gamma (ap1g1).